Reading from the N-terminus, the 121-residue chain is MSSSFFCFFLFCFQTCLIQNVYSQCLGRVGPGGPPLGPYGGPLGGPGYGPVGYGGCGGYGGSGIGNVAVAGELPVAGSAAVLGQVPVIGAVEFAGPACAVGSVSISGACGPTCGCGGSPYY.

The first 23 residues, 1-23 (MSSSFFCFFLFCFQTCLIQNVYS), serve as a signal peptide directing secretion. Residues 24 to 57 (QCLGRVGPGGPPLGPYGGPLGGPGYGPVGYGGCG) form a left arm region. The segment at 58-105 (GYGGSGIGNVAVAGELPVAGSAAVLGQVPVIGAVEFAGPACAVGSVSI) is central domain. The segment at 106–121 (SGACGPTCGCGGSPYY) is right arm.

It belongs to the chorion protein family.

Its function is as follows. This protein is one of many from the eggshell of the silk moth. This chain is Chorion class CA protein ERA.4 (ERA.4), found in Bombyx mori (Silk moth).